Consider the following 1155-residue polypeptide: MLIHPFIQSFTEIIDNRMKLGNNMEGVIECKNCQTDTPKCNKVCLTCNSDIGERCWRCNYLGKINSKFCFRCNVKLHPTSIPPKDSIQPIPIFTKHPIASTLLINKSIIPTQSENNSINDNNNNNNNNNNNNNNNNNNNNNNNNNNNNNTNNNDSKIIDATITNTKNNNTTNNNNISNNNSSNIISNSNNNNNNNNNNNNNNNNNNNNNNNLNFLKKSTSCDNGSFESISDSISPIKDIINNINNRTKDIEKLNSALPLNKKSNSSTSWSNFNTFKNNSKTNNNNNNNNNNNNNNNNNNNNNNYKPTITSSQTQPSLMENSKDIDKKEKIPSNINNNRSTTIIYKYQEDNSEDYTDDGDFEEFQINSNLTSESSSIDSLIIKDGVIATTVTSSTINCINDNNFDPDQLSSSTSSIKKPKLFYSITKKKLVSQSPPPPQPPFLASASSSSTTTITTTDSLEKSIKDSTPIATTLVNDYQNQNQNLNNESAASSSSLSTTTTTTTTTTTTTLLPDSQTNLNNLIFIEKLNNDLSGSIETLNNSLNNSLNSLNSSFNFRLNLNSITNNEDKRLSNSSLLDEIIDAFPSPPSKNPYISVLNTSGGIGSNSNSSNNNNSNSNNITNSNSSSFSKKNSNNNNNYQPVISLPIPIVNHQQQQQQQQLQTAAILGNNNINFIQNPSSTSTTTTTTTASTTTILIKSDHRTNLIKEILTTELDYVNDLETIINVFCKPLRDFISNEDSASIFSNIEQIWQINKQLYENLISNTLTIGQVFSNMSDSLKVYSVYCNYHQKSLDSLNQLLKTPQNESFFDQLLSKPELRGMGPHSFLIKPVQRICKYPLLLKELLKATAEDHFDYPQLILAVEKIEKIVGTINSQKKEMETWQRTMQLIQNLKGADNLQLLAANRHLILEGSLHLVIGFTENAEKKNSSLKFKKGVYFLFNDLFLFTKQKGTTYKLLFYTQLDNVLIHANVSNCFPADKSVFSLVEIGVGGRKWTFCNTNSNSSNISNSGNSSGIINSSSSSSGSCSNGGNSSGYNNLNNTCGIYSGNSNNNNNNNNNNNNIFSTIQKLIEKTWEDKFMGQSSVSHRLSIPSTSSPNNGASLNGNSSSNSSSTSISTVGSPNVTSAAKQQQQLQQQQQSSKKRNRRLVKSLVNIKT.

Disordered stretches follow at residues 114–216, 259–333, 429–460, 484–508, and 604–639; these read ENNS…NFLK, LNKK…IPSN, LVSQ…DSLE, LNNE…TTTT, and SNSN…NNYQ. Low complexity-rich tracts occupy residues 115-153, 161-211, and 260-303; these read NNSI…TNNN, TITN…NNNN, and NKKS…NNNN. Residues 192–257 are a coiled coil; that stretch reads NNNNNNNNNN…KDIEKLNSAL (66 aa). Positions 304 to 319 are enriched in polar residues; the sequence is YKPTITSSQTQPSLME. The span at 320-330 shows a compositional bias: basic and acidic residues; that stretch reads NSKDIDKKEKI. Low complexity predominate over residues 441-457; it reads FLASASSSSTTTITTTD. A compositionally biased stretch (low complexity) spans 604–637; it reads SNSNSSNNNNSNSNNITNSNSSSFSKKNSNNNNN. The 175-residue stretch at 700-874 folds into the DH domain; sequence HRTNLIKEIL…EKIVGTINSQ (175 aa). The tract at residues 1084–1155 is disordered; sequence SHRLSIPSTS…LVKSLVNIKT (72 aa). 2 stretches are compositionally biased toward low complexity: residues 1093 to 1121 and 1128 to 1137; these read SSPN…GSPN and QQQQLQQQQQ.

Its function is as follows. GTPase-activating protein. The protein is RhoGEF domain-containing protein gxcJ (gxcJ) of Dictyostelium discoideum (Social amoeba).